The primary structure comprises 1151 residues: MSAPDYMQCAEDHQTLLVVVQPVGVIKNENFFKIYNRVSSVCQVNPMNTQRLLSIRYRHQYPVDNNEWGDFQTHRKVVGLICIAECTSARDLPHTILKFEQQKEAYSSTLYDSRLFLFGFQGEMADQSRIDVASYPSYDNCAAVDKRVEDFIQSLFIVLESKRLDRTSEKSGEKIPLLYVPYEKKDFVGLDPDSRHYKKRCQGRMRKHVGDLCLQAGMLQDALVHYHMAVELLRAVNDFVWLGAALEGLCSASVIHHYPGGTGGKAGTQLRQSVTMSADSFKRHRPGAQEVLIDPGALSTNGINMDASTEIGRAKNCLSPDDIIEKYKEAISYYGKSKAAGVIELEACVKAVRVLAIQKKSMDASEFLQNVVYINLRQLSEEEKIQRYSVLSELYELIGFHRKSAFFKRVAAMQCVAPSIVEPGWKACYKLLLETLPGYSLSLDPKDFSKGTHKGWAAVQMRLLHELVYASRRMGNPALAVRHLSFLLQTMLDFLSDQEKKDVAQSLESYTSKCPGTMDPITLPEGLVLPPVPFTKLPIVRSVKLLDLPVILRPQKVKNLLGQKLSTKSPFIYSPIIAHNRSEEKNKKIDFQWVQGDVCEVQLMVYNPMPFELRVETMGLLTSGVEFEYLPAALSLPAESGLYPVTLVGVPRTTGQITVNGYHTSVCGVYSDCLLDNLPGLKNNGCTVEVIPALPRLQISTSLPRSAHVLQPSSGDEVSTHVSVQLYNGETQKVIIKLENIGAEPLEKLEVTSKTVNTKEKFYGDFLSWDLEPTLSQFPLKPGNTATLTVYIKVKLDFSCQENLLQDLSDDGISVSGLQISSPFRHVSKPRVETKPVNQSDSKSSDFSHVKTLEGILNFKYSGGPGHVEGYYRNLSLGLHVDVEPSVFFTRVSTLPATSTRQCHLLFDVFNSTEHELTINAKDNQELILHAGECQRMAIQVDKFNFEGISDAPSEKQNYHNMKEIEEERQHSKGLEINSKLGIRWKIPTLKREGEASVEGVLNQLVLEHLQLAPLQWDVLVDGKPCDCDAIADCKVGDPIHLEVRLTNCSKNAVGPFALTVIPYQDYQNGVHNHELQDIVTFVGSNTFYIGAVQPMDRSVCFGALLFLYTGDFYLDIKFQDDNSNRELPLSWFCLPSVHIRAIDTLNETKF.

It belongs to the NIBP family. Part of the multisubunit TRAPP (transport protein particle) complex.

It localises to the golgi apparatus. The protein localises to the cis-Golgi network. It is found in the endoplasmic reticulum. Its subcellular location is the cytoplasm. In terms of biological role, functions as an activator of NF-kappa-B through increased phosphorylation of the IKK complex. May function in neuronal cells differentiation. May play a role in vesicular transport from endoplasmic reticulum to Golgi. This chain is Trafficking protein particle complex subunit 9 (trappc9), found in Xenopus laevis (African clawed frog).